We begin with the raw amino-acid sequence, 355 residues long: tRNA pseudouridine synthase D (355 aa).

The Nucleophile role is filled by Asp-84. The region spanning 160-306 (GVPNYFGLQR…MAHERRILRL (147 aa)) is the TRUD domain.

This sequence belongs to the pseudouridine synthase TruD family.

The enzyme catalyses uridine(13) in tRNA = pseudouridine(13) in tRNA. Functionally, responsible for synthesis of pseudouridine from uracil-13 in transfer RNAs. The sequence is that of tRNA pseudouridine synthase D from Pseudomonas aeruginosa (strain LESB58).